The sequence spans 63 residues: UPF0512 protein X (63 aa).

This sequence belongs to the UPF0512 family.

In Dictyostelium discoideum (Social amoeba), this protein is UPF0512 protein X.